A 345-amino-acid polypeptide reads, in one-letter code: Fructose-1,6-bisphosphatase class 1 2 (345 aa).

Residues Glu90, Asp109, Leu111, and Asp112 each coordinate Mg(2+). Substrate contacts are provided by residues 112–115 (DGSS) and Asn200. Residue Glu272 coordinates Mg(2+).

It belongs to the FBPase class 1 family. As to quaternary structure, homotetramer. Mg(2+) is required as a cofactor.

It is found in the cytoplasm. The catalysed reaction is beta-D-fructose 1,6-bisphosphate + H2O = beta-D-fructose 6-phosphate + phosphate. It participates in carbohydrate biosynthesis; gluconeogenesis. This chain is Fructose-1,6-bisphosphatase class 1 2, found in Nitrobacter hamburgensis (strain DSM 10229 / NCIMB 13809 / X14).